We begin with the raw amino-acid sequence, 173 residues long: NADH-ubiquinone oxidoreductase chain 6 (173 aa).

The next 5 helical transmembrane spans lie at 1–21 (MTYF…AVAS), 27–47 (YGVV…LSLG), 48–68 (VSFV…VVFV), 91–111 (GVGF…IGCL), and 141–161 (VGMF…VLEL).

It belongs to the complex I subunit 6 family.

It is found in the mitochondrion membrane. It carries out the reaction a ubiquinone + NADH + 5 H(+)(in) = a ubiquinol + NAD(+) + 4 H(+)(out). Core subunit of the mitochondrial membrane respiratory chain NADH dehydrogenase (Complex I) that is believed to belong to the minimal assembly required for catalysis. Complex I functions in the transfer of electrons from NADH to the respiratory chain. The immediate electron acceptor for the enzyme is believed to be ubiquinone. The protein is NADH-ubiquinone oxidoreductase chain 6 (MT-ND6) of Fratercula arctica (Atlantic puffin).